A 137-amino-acid chain; its full sequence is Small ribosomal subunit protein uS9 (137 aa).

Residues 106 to 117 (KTEGYLTRDPRA) are compositionally biased toward basic and acidic residues. The tract at residues 106–137 (KTEGYLTRDPRAKERRKYGLRKARKAPQYSKR) is disordered. Basic residues predominate over residues 118–137 (KERRKYGLRKARKAPQYSKR).

This sequence belongs to the universal ribosomal protein uS9 family.

The chain is Small ribosomal subunit protein uS9 from Thermosynechococcus vestitus (strain NIES-2133 / IAM M-273 / BP-1).